The sequence spans 182 residues: MILADAKSKMQSSVESTQRAFNTIRTGRANASLLDKVLVDYYGSPTPLKSLANISTPDASTILIQPYERNTLNIIEKAISLSDVGLTPSNDGSVIRLNIPPLTSDRRKEFVKMATKYAEEGRVAIRNIRRDAIDSIRKQEKASEISKDESKDQQDNLQKLTNEYTSRIDALLAEKEKDITTV.

The protein belongs to the RRF family.

It localises to the cytoplasm. Responsible for the release of ribosomes from messenger RNA at the termination of protein biosynthesis. May increase the efficiency of translation by recycling ribosomes from one round of translation to another. This is Ribosome-recycling factor from Nostoc punctiforme (strain ATCC 29133 / PCC 73102).